We begin with the raw amino-acid sequence, 486 residues long: Lipase 1 (486 aa).

Cys58 and Cys82 are joined by a disulfide. The active-site Acyl-ester intermediate is the Ser193. Asp303 (charge relay system) is an active-site residue. N-linked (GlcNAc...) asparagine glycosylation occurs at Asn332. The active-site Charge relay system is His392.

This sequence belongs to the type-B carboxylesterase/lipase family.

The enzyme catalyses a triacylglycerol + H2O = a diacylglycerol + a fatty acid + H(+). This is Lipase 1 (LIP1) from Yarrowia lipolytica (strain CLIB 122 / E 150) (Yeast).